We begin with the raw amino-acid sequence, 236 residues long: Lectin (236 aa).

N-linked (GlcNAc...) asparagine glycosylation is present at Asn-118.

It belongs to the leguminous lectin family. In terms of assembly, homodimer of noncovalently associated chains.

Its function is as follows. D-mannose and D-glucose specific lectin. In Onobrychis viciifolia (Common sainfoin), this protein is Lectin.